Reading from the N-terminus, the 395-residue chain is Acetate kinase (395 aa).

Asparagine 10 contributes to the Mg(2+) binding site. Lysine 17 lines the ATP pocket. Arginine 87 is a binding site for substrate. The active-site Proton donor/acceptor is aspartate 144. ATP-binding positions include 204–208 (HLGNG), 279–281 (DMR), and 327–331 (GIGEN). Glutamate 381 lines the Mg(2+) pocket.

Belongs to the acetokinase family. Homodimer. It depends on Mg(2+) as a cofactor. Requires Mn(2+) as cofactor.

The protein resides in the cytoplasm. It carries out the reaction acetate + ATP = acetyl phosphate + ADP. Its pathway is metabolic intermediate biosynthesis; acetyl-CoA biosynthesis; acetyl-CoA from acetate: step 1/2. Functionally, catalyzes the formation of acetyl phosphate from acetate and ATP. Can also catalyze the reverse reaction. This Stutzerimonas stutzeri (strain A1501) (Pseudomonas stutzeri) protein is Acetate kinase.